Consider the following 169-residue polypeptide: ATP synthase subunit b, sodium ion specific (169 aa).

The chain crosses the membrane as a helical span at residues 5–27; sequence SFISLDWGVVFQIVNTIVMYLIL.

The protein belongs to the ATPase B chain family. F-type ATPases have 2 components, F(1) - the catalytic core - and F(0) - the membrane proton channel. F(1) has five subunits: alpha(3), beta(3), gamma(1), delta(1), epsilon(1). F(0) has three main subunits: a(1), b(2) and c(10-14). The alpha and beta chains form an alternating ring which encloses part of the gamma chain. F(1) is attached to F(0) by a central stalk formed by the gamma and epsilon chains, while a peripheral stalk is formed by the delta and b chains.

The protein resides in the cell membrane. F(1)F(0) ATP synthase produces ATP from ADP in the presence of a proton or sodium gradient. F-type ATPases consist of two structural domains, F(1) containing the extramembraneous catalytic core and F(0) containing the membrane proton channel, linked together by a central stalk and a peripheral stalk. During catalysis, ATP synthesis in the catalytic domain of F(1) is coupled via a rotary mechanism of the central stalk subunits to proton translocation. In terms of biological role, component of the F(0) channel, it forms part of the peripheral stalk, linking F(1) to F(0). Functionally, in this organism this enzyme may function as an ATP-driven Na(+) ion pump to generate a Na(+) ion electrochemical gradient rather than as an ATP synthase. The polypeptide is ATP synthase subunit b, sodium ion specific (atpF) (Clostridium paradoxum).